A 499-amino-acid chain; its full sequence is MTSIDLGLKRTLTDVLEDELYNMRLREQETAQEQLDLREAGKVRQVQLQQQQMFSQYADPSVTMMSGDVACEGVLSTAPANLLANPDIRQAPAPQAQAQMLQVNPEVLISYANKNSAHMNVSAVDDKLNRGLVDENSYYDDVDYSSMNAKMADWQLDDNVAMLDNNDARLIFDNEFADDDDLSDDENLFDEGLENYHNELVSSNSPIESLDVAEHKESVDDRLRKYHLDNIQNILSKTSTNDKDILQIKLPSDFTTTNLHSTNPSGLIEDPSQLVLGSSKKITEDTHVEEESKNLPDLTELTSATEIEDILLAVDSDDDDLYTKPIAKQTTKKDNSKPVEKTVVEKTSSVTKAGSNHSRSTLARPTAHARKLSSSRKQAPKVYNPKTTTKSTHTHSKNNATHEAFVCELVNSVTNEVCGAQFSRTYDLTRHQNTIHAKKRSIFRCSECIRALGDEGFQKTFSRLDALTRHIKAKHENLSLEERQQVTKYAKSNIGFVTA.

The tract at residues 329–397 (QTTKKDNSKP…TTKSTHTHSK (69 aa)) is disordered. Positions 331 to 344 (TKKDNSKPVEKTVV) are enriched in basic and acidic residues. The span at 345 to 363 (EKTSSVTKAGSNHSRSTLA) shows a compositional bias: polar residues. The C2H2-type zinc-finger motif lies at 405–436 (FVCELVNSVTNEVCGAQFSRTYDLTRHQNTIH).

It is found in the nucleus. Transcription factor that acts as a transcriptional activator of a number of genes encoding proteasomal subunits. Plays a role in ergosterol and plasma membrane homeostasis, and subsequent azole resistance. Regulates the expression of 212 genes, activating 80 genes and repressing, likely in an indirect fashion, 132 genes. Targets comprise several proteasome and ergosterol biosynthesis genes, including ERG1, ERG2, ERG3, and ERG11. Directly regulates ERG11 expression through the 3'-TTGCAAA-5' binding motif. In Candida glabrata (strain ATCC 2001 / BCRC 20586 / JCM 3761 / NBRC 0622 / NRRL Y-65 / CBS 138) (Yeast), this protein is C2H2-type transcription factor RPN4.